We begin with the raw amino-acid sequence, 321 residues long: Chitinase-like protein 1 (321 aa).

The first 26 residues, 1–26 (MVTIRSGSIVILVLLAVSFLALVANG), serve as a signal peptide directing secretion. An intrachain disulfide couples C42 to C55. N57 carries an N-linked (GlcNAc...) asparagine glycan. A disulfide bond links C157 and C167. N-linked (GlcNAc...) asparagine glycans are attached at residues N208 and N244. C267 and C304 are disulfide-bonded. Positions 297 to 321 (GPNDELSCAEQKPFNPSTVPSSSSS) are disordered. The span at 310 to 321 (FNPSTVPSSSSS) shows a compositional bias: polar residues.

Belongs to the glycosyl hydrolase 19 family. In terms of tissue distribution, mostly expressed in seedlings shoots and roots, stems, and flowers, and, to a lower extent, in flowers, mature leaves and roots.

It localises to the secreted. In terms of biological role, no chitinase activity. Essential for normal plant growth and development. Regulates cell expansion extent and differentiation at least in roots and hypocotyls. Prevents lignin accumulation in the pith. May modulate ethylene-mediated regulation during development. Probably required to establish thermotolerance acclimation. Plays a role for controlled anisotropic cell expansion in the regulation of waving during root gravitropism and thigmotropism. Involved in the root system architecture adaptation to multiple environmental conditions such as nitrate. Contributes to salt tolerance and possibly to drought by preventing the overaccumulation of sodium ions. The chain is Chitinase-like protein 1 (CTL1) from Arabidopsis thaliana (Mouse-ear cress).